Consider the following 557-residue polypeptide: Copine-7 (557 aa).

C2 domains lie at 1-128 (MSGD…TRPL) and 135-263 (NAGK…AQWD). Positions 168, 174, 230, 232, and 238 each coordinate Ca(2+). One can recognise a VWFA domain in the interval 306-505 (HCTVAIDFTA…PALRDIVQFV (200 aa)).

This sequence belongs to the copine family. Requires Ca(2+) as cofactor.

The protein localises to the cytoplasm. Its subcellular location is the nucleus. The protein resides in the cell membrane. Calcium-dependent phospholipid-binding protein that may play a role in calcium-mediated intracellular processes. The sequence is that of Copine-7 from Mus musculus (Mouse).